The following is a 197-amino-acid chain: RIP-like protein (197 aa).

The disordered stretch occupies residues 1-20 (MNSTQSPVYRTSVEQKRHAQ). An RIP-type zinc finger spans residues 122 to 191 (CPVCQIKNLR…GQLYDMCGSC (70 aa)).

The chain is RIP-like protein (Ripalpha) from Drosophila melanogaster (Fruit fly).